The following is a 253-amino-acid chain: Major prion protein (253 aa).

The N-terminal stretch at 1-22 is a signal peptide; the sequence is MANLGCWMLVLFVATWSDLGLC. An interaction with ADGRG6 region spans residues 23–38; the sequence is KKRPKPGGWNTGGSRY. An interaction with GRB2, ERI3 and SYN1 region spans residues 23-230; that stretch reads KKRPKPGGWN…ESQAYYQRGS (208 aa). Positions 26-108 are disordered; sequence PKPGGWNTGG…WNKPSKPKTS (83 aa). 5 tandem repeats follow at residues 51–59, 60–67, 68–75, 76–83, and 84–91. Positions 51–91 are 5 X 8 AA tandem repeats of P-H-G-G-G-W-G-Q; it reads PQGGGGWGQPHGGGWGQPHGGGWGQPHGGGWGQPHGGGWGQ. The segment covering 52–95 has biased composition (gly residues); the sequence is QGGGGWGQPHGGGWGQPHGGGWGQPHGGGWGQPHGGGWGQGGGT. Residues histidine 61, glycine 62, glycine 63, histidine 69, glycine 70, glycine 71, histidine 77, glycine 78, glycine 79, histidine 85, glycine 86, and glycine 87 each contribute to the Cu(2+) site. Cysteine 179 and cysteine 214 are disulfide-bonded. 2 N-linked (GlcNAc...) asparagine glycosylation sites follow: asparagine 181 and asparagine 197. A lipid anchor (GPI-anchor amidated serine) is attached at serine 230. Residues 231–253 constitute a propeptide, removed in mature form; it reads SMVLFSSPPVILLISFLIFLIVG.

This sequence belongs to the prion family. Monomer and homodimer. Has a tendency to aggregate into amyloid fibrils containing a cross-beta spine, formed by a steric zipper of superposed beta-strands. Soluble oligomers may represent an intermediate stage on the path to fibril formation. Copper binding may promote oligomerization. Interacts with GRB2, APP, ERI3/PRNPIP and SYN1. Mislocalized cytosolically exposed PrP interacts with MGRN1; this interaction alters MGRN1 subcellular location and causes lysosomal enlargement. Interacts with APP. Interacts with KIAA1191. Interacts with ADGRG6.

It is found in the cell membrane. The protein localises to the golgi apparatus. Its primary physiological function is unclear. May play a role in neuronal development and synaptic plasticity. May be required for neuronal myelin sheath maintenance. May promote myelin homeostasis through acting as an agonist for ADGRG6 receptor. May play a role in iron uptake and iron homeostasis. Soluble oligomers are toxic to cultured neuroblastoma cells and induce apoptosis (in vitro). Association with GPC1 (via its heparan sulfate chains) targets PRNP to lipid rafts. Also provides Cu(2+) or Zn(2+) for the ascorbate-mediated GPC1 deaminase degradation of its heparan sulfate side chains. In Colobus guereza (Mantled guereza), this protein is Major prion protein (PRNP).